Here is a 264-residue protein sequence, read N- to C-terminus: ATP synthase subunit a (264 aa).

Transmembrane regions (helical) follow at residues 39–59 (LDTL…FYIV), 97–117 (VAPL…MDLV), 139–159 (TADP…VIFY), 205–225 (LFGN…LPWW), and 239–259 (LLVI…YISL).

The protein belongs to the ATPase A chain family. As to quaternary structure, F-type ATPases have 2 components, CF(1) - the catalytic core - and CF(0) - the membrane proton channel. CF(1) has five subunits: alpha(3), beta(3), gamma(1), delta(1), epsilon(1). CF(0) has three main subunits: a(1), b(2) and c(9-12). The alpha and beta chains form an alternating ring which encloses part of the gamma chain. CF(1) is attached to CF(0) by a central stalk formed by the gamma and epsilon chains, while a peripheral stalk is formed by the delta and b chains.

It localises to the cell inner membrane. Its function is as follows. Key component of the proton channel; it plays a direct role in the translocation of protons across the membrane. The sequence is that of ATP synthase subunit a from Coxiella burnetii (strain CbuK_Q154) (Coxiella burnetii (strain Q154)).